A 546-amino-acid chain; its full sequence is T-complex protein 1 subunit zeta (546 aa).

An N-acetylserine modification is found at serine 2. Position 249 is a phosphoserine (serine 249).

Belongs to the TCP-1 chaperonin family. As to quaternary structure, heterooligomeric complex of about 850 to 900 kDa that forms two stacked rings, 12 to 16 nm in diameter.

It localises to the cytoplasm. Its function is as follows. Molecular chaperone; assists the folding of proteins upon ATP hydrolysis. Known to play a role, in vitro, in the folding of actin and tubulin. In yeast may play a role in mitotic spindle formation. This is T-complex protein 1 subunit zeta (CCT6) from Saccharomyces cerevisiae (strain ATCC 204508 / S288c) (Baker's yeast).